The sequence spans 363 residues: Chorismate synthase (363 aa).

NADP(+) is bound by residues Arg48 and Arg54. FMN contacts are provided by residues 125-127, 237-238, Gly277, 292-296, and Arg318; these read RSS, NA, and KPTSS.

It belongs to the chorismate synthase family. In terms of assembly, homotetramer. The cofactor is FMNH2.

It catalyses the reaction 5-O-(1-carboxyvinyl)-3-phosphoshikimate = chorismate + phosphate. The protein operates within metabolic intermediate biosynthesis; chorismate biosynthesis; chorismate from D-erythrose 4-phosphate and phosphoenolpyruvate: step 7/7. In terms of biological role, catalyzes the anti-1,4-elimination of the C-3 phosphate and the C-6 proR hydrogen from 5-enolpyruvylshikimate-3-phosphate (EPSP) to yield chorismate, which is the branch point compound that serves as the starting substrate for the three terminal pathways of aromatic amino acid biosynthesis. This reaction introduces a second double bond into the aromatic ring system. This Pseudomonas paraeruginosa (strain DSM 24068 / PA7) (Pseudomonas aeruginosa (strain PA7)) protein is Chorismate synthase.